A 128-amino-acid polypeptide reads, in one-letter code: Large ribosomal subunit protein bL12 (128 aa).

It belongs to the bacterial ribosomal protein bL12 family. In terms of assembly, homodimer. Part of the ribosomal stalk of the 50S ribosomal subunit. Forms a multimeric L10(L12)X complex, where L10 forms an elongated spine to which 2 to 4 L12 dimers bind in a sequential fashion. Binds GTP-bound translation factors.

Forms part of the ribosomal stalk which helps the ribosome interact with GTP-bound translation factors. Is thus essential for accurate translation. This chain is Large ribosomal subunit protein bL12, found in Synechococcus sp. (strain CC9902).